The following is a 286-amino-acid chain: MANAKEIKTKIASVQNTQKITSAMEMVAASKMRKAQDRMASSRPYAENMRKVIGHVAQGSLEYKHPYLEVREAKRVGYIVVSTDRGLCGGLNVNLFKKVVADVKKQREAGAEVEFCPIGARSVQFFNSFGGQVSAHASGLGDAPSLTDLIGTVRVMLEAYNEGKLDRLYVVFNKFVNTMTQTPVIEQLLPLPKSEEDEISHHWDYLYEPDPKELLDTLLVRYVESQVYQGVVENIASEQAARMVAMKAATDNAGELISDLELVYNKARQAAITQELSEIVSGAAAV.

The protein belongs to the ATPase gamma chain family. In terms of assembly, F-type ATPases have 2 components, CF(1) - the catalytic core - and CF(0) - the membrane proton channel. CF(1) has five subunits: alpha(3), beta(3), gamma(1), delta(1), epsilon(1). CF(0) has three main subunits: a, b and c.

It localises to the cell inner membrane. In terms of biological role, produces ATP from ADP in the presence of a proton gradient across the membrane. The gamma chain is believed to be important in regulating ATPase activity and the flow of protons through the CF(0) complex. In Shewanella piezotolerans (strain WP3 / JCM 13877), this protein is ATP synthase gamma chain.